Here is a 673-residue protein sequence, read N- to C-terminus: Potassium voltage-gated channel subfamily KQT member 1 (673 aa).

Disordered regions lie at residues 1–28 (MAAA…RGSA) and 61–80 (GPSS…LGPR). Over 1 to 118 (MAAATSPPRA…YNFLERPTGW (118 aa)) the chain is Cytoplasmic. The residue at position 27 (serine 27) is a Phosphoserine. Residues 66–75 (AAPAASPAAA) are compositionally biased toward low complexity. The helical transmembrane segment at 119-140 (KCFVYHFAVFLIVLVCLIFSVL) threads the bilayer. The Extracellular portion of the chain corresponds to 141-151 (STIEQYVALAT). The chain crosses the membrane as a helical span at residues 152 to 174 (GTLFWMEIVLVVFFGTEYAVRLW). At 175-190 (SAGCRSKYVGIWGRLR) the chain is on the cytoplasmic side. The helical transmembrane segment at 191 to 216 (FARKPISIIDLIVVVASMVVLCVGSK) threads the bilayer. Residues 217–224 (GQVFATSA) lie on the Extracellular side of the membrane. Residues 225–240 (IRGIRFLQILRMLHVD) form a helical; Voltage-sensor membrane-spanning segment. The segment at 236 to 244 (MLHVDRQGG) is interaction with KCNE3. At 241–258 (RQGGTWRLLGSVVFIHRQ) the chain is on the cytoplasmic side. Glutamine 242 is a binding site for a 1,2-diacyl-sn-glycero-3-phospho-(1D-myo-inositol-4,5-bisphosphate). A helical membrane pass occupies residues 259–281 (ELITTLYIGFLGLIFSSYFVYLA). Over 282-297 (EKDAVNESGQVEFGSY) the chain is Extracellular. N-linked (GlcNAc...) asparagine glycosylation occurs at asparagine 287. Positions 298–318 (ADALWWGVVTVTTIGYGDKVP) form an intramembrane region, pore-forming. Topologically, residues 319–320 (QT) are extracellular. The chain crosses the membrane as a helical span at residues 321–346 (WVGKTIASCFSVFAISFFALPAGILG). Residues 347-673 (SGFALKVQQK…VPGRGPEEGS (327 aa)) are Cytoplasmic-facing. The interaction with CALM stretch occupies residues 368 to 380 (AAASLIQTAWRCY). Residues serine 405 and serine 407 each carry the phosphoserine modification. The interval 514–528 (KVIRRMQYFVAKKKF) is interaction with CALM; calcium-dependent. The segment at 534 to 571 (PYDVRDVIEQYSQGHLNLMVRIKELQRRLDQSIGRPAL) is interaction with KCNE1 C-terminus. The interval 587–615 (IGARLNRVEDKVTQLDQRLELITDMLQQL) is interaction with AKAP9. The C-terminal assembly domain (tetramerization) stretch occupies residues 588 to 619 (GARLNRVEDKVTQLDQRLELITDMLQQLLSLH). The interval 619–673 (HRGGTPGSRAPGGGGAQVAQPCSGGSINPELFLPSNALPTYEQLTVPGRGPEEGS) is disordered. Over residues 622–634 (GTPGSRAPGGGGA) the composition is skewed to gly residues.

Belongs to the potassium channel family. KQT (TC 1.A.1.15) subfamily. Kv7.1/KCNQ1 sub-subfamily. As to quaternary structure, tetramer. Heterotetramer with KCNE1; targets to the membrane raft. Interacts (via C-terminus) with CALM; forms a heterooctameric structure (with 4:4 KCNQ1:CALM stoichiometry) in a calcium-independent manner. Interacts with AKAP9; targets protein kinase A (PKA) catalytic and regulatory subunits and protein phosphatase 1 (PP1) to the KCNQ1-KCNE1 complex, allowing PKA-mediated phosphorylation and increase of delayed rectifier potassium channel activity. Interacts with KCNE2; form a heterooligomer complex that targets to the membrane raft and leading to currents with an apparently instantaneous activation, a rapid deactivation process and a linear current-voltage relationship and decreases the amplitude of the outward current. Interacts with AP2M1; mediates estrogen-induced internalization via clathrin-coated vesicles. Interacts with NEDD4L; promotes internalization and decreases I(Ks) currents. Interacts with USP2; counteracts the NEDD4L-specific down-regulation of I(Ks) and restore plasma membrane localization. Heterotetramer with KCNQ5; has a voltage-gated potassium channel activity. Interacts with KCNE3; four KCNE3 molecules are bound to one KCNQ1 tetramer (4:4 KCNQ1:KCNE3 stoichiometry); alters membrane raft localization; affects KCNQ1 structure and gating properties. Interacts with KCNE4; impairs KCNQ1 localization in lipid rafts and inhibits voltage-gated potassium channel activity. Interacts with KCNE5; impairs KCNQ1 localization in lipid rafts and only conducts current upon strong and continued depolarization. Interacts with SLC5A3; forms coregulatory channel-transporter complexes that modulate Na(+)-coupled myo-inositol influx through the transporter. In terms of processing, ubiquitinated by NEDD4L; promotes internalization. The ubiquitinylated form is internalized through a clathrin-mediated endocytosis by interacting with AP2M1 and is recycled back to the cell membrane via RAB4A and RAB11A. Post-translationally, deubiquitinated by USP2; counteracts the NEDD4L-specific down-regulation of I(Ks) and restores the membrane localization.

The protein resides in the cell membrane. It is found in the cytoplasmic vesicle membrane. It localises to the early endosome. Its subcellular location is the membrane raft. The protein localises to the endoplasmic reticulum. The protein resides in the basolateral cell membrane. It is found in the apical cell membrane. The catalysed reaction is K(+)(in) = K(+)(out). With respect to regulation, PIP2 molecule is essential to activate KCNQ channels by inducing the coupling of the voltage-sensing domain (VSD) and the pore-forming domain (PD). Upon channel activation, PIP2 disrupts the VSD-calmodulin/CALM interactions, causing the release of CALM from the VSD which triggers the opening of the gate. Calcium potentiates KCNQ1 channel current through calcium-bound CALM. Calcium-bound CALM competes with PIP2 to stabilize the channel open state. Pore-forming subunit of the voltage-gated potassium (Kv) channel involved in the regulation of cardiomyocyte excitability and important in normal development and functions of myocardium, inner ear, stomach and colon. Associates with KCNE beta subunits that modulates current kinetics. Induces a voltage-dependent by rapidly activating and slowly deactivating potassium-selective outward current. Also promotes a delayed voltage activated potassium current showing outward rectification characteristic. During beta-adrenergic receptor stimulation participates in cardiac repolarization by associating with KCNE1 to form the I(Ks) cardiac potassium current that increases the amplitude and slows down the activation kinetics of outward potassium current I(Ks). Muscarinic agonist oxotremorine-M strongly suppresses KCNQ1/KCNE1 current. When associated with KCNE3, forms the potassium channel that is important for cyclic AMP-stimulated intestinal secretion of chloride ions. This interaction with KCNE3 is reduced by 17beta-estradiol, resulting in the reduction of currents. During conditions of increased substrate load, maintains the driving force for proximal tubular and intestinal sodium ions absorption, gastric acid secretion, and cAMP-induced jejunal chloride ions secretion. Allows the provision of potassium ions to the luminal membrane of the secretory canaliculus in the resting state as well as during stimulated acid secretion. When associated with KCNE2, forms a heterooligomer complex leading to currents with an apparently instantaneous activation, a rapid deactivation process and a linear current-voltage relationship and decreases the amplitude of the outward current. When associated with KCNE4, inhibits voltage-gated potassium channel activity. When associated with KCNE5, this complex only conducts current upon strong and continued depolarization. Also forms a heterotetramer with KCNQ5 that has a voltage-gated potassium channel activity. Binds with phosphatidylinositol 4,5-bisphosphate. KCNQ1-KCNE2 channel associates with Na(+)-coupled myo-inositol symporter in the apical membrane of choroid plexus epithelium and regulates the myo-inositol gradient between blood and cerebrospinal fluid with an impact on neuron excitability. This chain is Potassium voltage-gated channel subfamily KQT member 1, found in Sus scrofa (Pig).